We begin with the raw amino-acid sequence, 63 residues long: Large ribosomal subunit protein bL28 (63 aa).

This sequence belongs to the bacterial ribosomal protein bL28 family.

This chain is Large ribosomal subunit protein bL28, found in Clostridium perfringens (strain SM101 / Type A).